We begin with the raw amino-acid sequence, 478 residues long: Transcription factor PIF1 (478 aa).

The residue at position 10 (Thr-10) is a Phosphothreonine; by CK2. Disordered regions lie at residues 56–80 (LHTKKPSSSPPKLLPSMDPQQQPSS), 122–144 (VSQVTAARPPVSSTNESRPPVRN), 172–210 (VRESTQVSPSATPSAAASESGLTRRTDGTDSSAVAGGGA), 230–294 (TSSS…LSER), and 391–478 (TQTH…HTTG). Low complexity predominate over residues 69-80 (LPSMDPQQQPSS). The segment covering 179–189 (SPSATPSAAAS) has biased composition (low complexity). Residue Thr-197 is modified to Phosphothreonine; by CK2. At Ser-202 the chain carries Phosphoserine; by CK2. 2 stretches are compositionally biased toward basic and acidic residues: residues 238-272 (SEIEPEKTNVDDRKRKEREATTTDETESRSEETKQ) and 284-294 (RAAEVHNLSER). In terms of domain architecture, bHLH spans 284–333 (RAAEVHNLSERKRRDRINERMKALQELIPRCNKSDKASMLDEAIEYMKSL). A compositionally biased stretch (polar residues) spans 415 to 426 (PNQQYDPTSGQP). Residues Ser-464, Ser-465, Ser-466, and Ser-469 each carry the phosphoserine; by CK2 modification. Residues 465–478 (SSKESEDHGNHTTG) show a composition bias toward basic and acidic residues.

As to quaternary structure, homodimer. Interacts with the photoactivated conformer (Pfr) of phytochromes A and B, PHYA and PHYB. Also interacts with APRR1/TOC1. Binds to RGL2, RGA and FHY3 (via N-terminus). Associates to PTAC12/HMR/PAP5 which acts as a transcriptional coactivator. Binds directly to PCH1 and PCHL; this interaction facilitates its association with phyB and its subsequent light-induced degradation. Phosphorylated at Thr-10, Thr-197, Ser-202, Ser-464, Ser-465, Ser-466 and Ser-469 by CK2. Phosphorylated and ubiquitinated after an exposure to light (especially red and far-red), in a phytochrome-dependent manner. Modified proteins undergo a proteasome-dependent degradation. Its stability and degradation plays a central role in photomorphogenesis of seedlings. Mainly expressed in leaves, stems and seedlings, and, to a lower extent, in fruits, flowers and roots.

The protein resides in the nucleus. With respect to regulation, DNA-binding ability is inhibited by PCH1 and PCHL to negatively regulate the expressions of its target genes. Transcription activator. Negatively regulates chlorophyll biosynthesis and seed germination in the dark, and lightinduced degradation of PIF1 relieves this negative regulation to promote photomorphogenesis. Binds to the G-box motif (5'-CACGTG-3') found in many light-regulated promoters. Promotes the expression of SOM, and thus modulates responses to abscisic acid (ABA) and gibberellic acid (GA). This Arabidopsis thaliana (Mouse-ear cress) protein is Transcription factor PIF1.